The chain runs to 202 residues: Small ribosomal subunit protein uS4 (202 aa).

The S4 RNA-binding domain maps to Ser91–Asp168.

It belongs to the universal ribosomal protein uS4 family. Part of the 30S ribosomal subunit. Contacts protein S5. The interaction surface between S4 and S5 is involved in control of translational fidelity.

One of the primary rRNA binding proteins, it binds directly to 16S rRNA where it nucleates assembly of the body of the 30S subunit. Functionally, with S5 and S12 plays an important role in translational accuracy. This Ehrlichia canis (strain Jake) protein is Small ribosomal subunit protein uS4.